The following is a 912-amino-acid chain: LPS-assembly protein LptD (912 aa).

The first 27 residues, 1-27 (MLYSPLYQSIRLILFGALGLSSLTVSA), serve as a signal peptide directing secretion.

Belongs to the LptD family. Component of the lipopolysaccharide transport and assembly complex. Interacts with LptE and LptA.

Its subcellular location is the cell outer membrane. In terms of biological role, together with LptE, is involved in the assembly of lipopolysaccharide (LPS) at the surface of the outer membrane. This Psychrobacter arcticus (strain DSM 17307 / VKM B-2377 / 273-4) protein is LPS-assembly protein LptD.